The primary structure comprises 752 residues: Protein GCN20 (752 aa).

Ala-2 is subject to N-acetylalanine. 2 ABC transporter domains span residues 199 to 464 (IHID…RKNA) and 532 to 748 (IQLQ…AAGV). Residues 232-239 (GQNGIGKS) and 565-572 (GANGCGKT) each bind ATP.

It belongs to the ABC transporter superfamily. ABCF family. EF3 subfamily. In terms of assembly, interacts (via N-terminus) with GCN1 (via C-terminus); this interaction stimulates GCN2 kinase activity in response to amino acid starvation. The GCN1-GCN20 complex interacts with GCN2 on translating ribosomes in amino acid-starved cells; this association stimulates GCN2 kinase activation by uncharged tRNAs, and hence allowing GCN4 translational activation and derepression of amino acid biosynthetic genes. Associates with ribosomes.

In terms of biological role, acts as a positive activator of the GCN2 protein kinase activity in response to in response to low amino acid, carbon, or purine availability. Component of the GCN1-GCN20 complex that forms a complex with GCN2 on translating ribosomes; during this process, GCN20 helps GCN1 to act as a chaperone to facilitate delivery of uncharged tRNAs that enter the A site of ribosomes to the tRNA-binding domain of GCN2, and hence stimulating GCN2 kinase activity. Participates in gene-specific mRNA translation activation, such as the transcriptional activator GCN4, by promoting the GCN2-mediated phosphorylation of eukaryotic translation initiation factor 2 (eIF-2-alpha/SUI2) on 'Ser-52', and hence allowing GCN4-mediated reprogramming of amino acid biosynthetic gene expression to alleviate nutrient depletion. In Saccharomyces cerevisiae (strain ATCC 204508 / S288c) (Baker's yeast), this protein is Protein GCN20.